A 103-amino-acid chain; its full sequence is uncharacterized protein (103 aa).

The protein localises to the plastid. Its subcellular location is the chloroplast. This is an uncharacterized protein from Auxenochlorella pyrenoidosa (Freshwater green alga).